Reading from the N-terminus, the 615-residue chain is DNA mismatch repair protein MutL (615 aa).

The disordered stretch occupies residues 363–397 (FAEPAVREPVAPRYTPAPASGSRPAAPWPNAQPGY). Residues 378-391 (PAPASGSRPAAPWP) show a composition bias toward low complexity.

Belongs to the DNA mismatch repair MutL/HexB family.

Functionally, this protein is involved in the repair of mismatches in DNA. It is required for dam-dependent methyl-directed DNA mismatch repair. May act as a 'molecular matchmaker', a protein that promotes the formation of a stable complex between two or more DNA-binding proteins in an ATP-dependent manner without itself being part of a final effector complex. The protein is DNA mismatch repair protein MutL of Escherichia coli O157:H7 (strain EC4115 / EHEC).